A 288-amino-acid polypeptide reads, in one-letter code: 33 kDa chaperonin (288 aa).

Intrachain disulfides connect C236–C238 and C269–C272.

The protein belongs to the HSP33 family. Under oxidizing conditions two disulfide bonds are formed involving the reactive cysteines. Under reducing conditions zinc is bound to the reactive cysteines and the protein is inactive.

The protein localises to the cytoplasm. Functionally, redox regulated molecular chaperone. Protects both thermally unfolding and oxidatively damaged proteins from irreversible aggregation. Plays an important role in the bacterial defense system toward oxidative stress. This Lactococcus lactis subsp. lactis (strain IL1403) (Streptococcus lactis) protein is 33 kDa chaperonin.